The following is a 131-amino-acid chain: Small ribosomal subunit protein uS8 (131 aa).

The protein belongs to the universal ribosomal protein uS8 family. Part of the 30S ribosomal subunit. Contacts proteins S5 and S12.

Functionally, one of the primary rRNA binding proteins, it binds directly to 16S rRNA central domain where it helps coordinate assembly of the platform of the 30S subunit. The protein is Small ribosomal subunit protein uS8 of Cupriavidus necator (strain ATCC 17699 / DSM 428 / KCTC 22496 / NCIMB 10442 / H16 / Stanier 337) (Ralstonia eutropha).